The following is a 262-amino-acid chain: tRNA (guanine-N(1)-)-methyltransferase (262 aa).

S-adenosyl-L-methionine is bound by residues Gly-112 and 132–137; that span reads IGDYIL.

Belongs to the RNA methyltransferase TrmD family. As to quaternary structure, homodimer.

Its subcellular location is the cytoplasm. The catalysed reaction is guanosine(37) in tRNA + S-adenosyl-L-methionine = N(1)-methylguanosine(37) in tRNA + S-adenosyl-L-homocysteine + H(+). Its function is as follows. Specifically methylates guanosine-37 in various tRNAs. This chain is tRNA (guanine-N(1)-)-methyltransferase, found in Desulfatibacillum aliphaticivorans.